The sequence spans 305 residues: Glycine--tRNA ligase alpha subunit (305 aa).

It belongs to the class-II aminoacyl-tRNA synthetase family. As to quaternary structure, tetramer of two alpha and two beta subunits.

It localises to the cytoplasm. It catalyses the reaction tRNA(Gly) + glycine + ATP = glycyl-tRNA(Gly) + AMP + diphosphate. The sequence is that of Glycine--tRNA ligase alpha subunit from Streptococcus suis (strain 98HAH33).